The following is a 158-amino-acid chain: Transcription elongation factor GreA (158 aa).

Positions 47–74 (NSEYDEAKNEQAFTEGRIIQLENMLKNA) form a coiled coil.

The protein belongs to the GreA/GreB family.

In terms of biological role, necessary for efficient RNA polymerase transcription elongation past template-encoded arresting sites. The arresting sites in DNA have the property of trapping a certain fraction of elongating RNA polymerases that pass through, resulting in locked ternary complexes. Cleavage of the nascent transcript by cleavage factors such as GreA or GreB allows the resumption of elongation from the new 3'terminus. GreA releases sequences of 2 to 3 nucleotides. This Clostridium perfringens (strain ATCC 13124 / DSM 756 / JCM 1290 / NCIMB 6125 / NCTC 8237 / Type A) protein is Transcription elongation factor GreA.